Consider the following 522-residue polypeptide: 2-isopropylmalate synthase (522 aa).

The Pyruvate carboxyltransferase domain maps to 5-267 (VIIFDTTLRD…ETGINAKEIH (263 aa)). Asp-14, His-202, His-204, and Asn-238 together coordinate Mn(2+). The tract at residues 392 to 522 (QLQQLVVQSD…MQKNRELGGV (131 aa)) is regulatory domain.

It belongs to the alpha-IPM synthase/homocitrate synthase family. LeuA type 1 subfamily. In terms of assembly, homodimer. Mn(2+) is required as a cofactor.

The protein localises to the cytoplasm. It catalyses the reaction 3-methyl-2-oxobutanoate + acetyl-CoA + H2O = (2S)-2-isopropylmalate + CoA + H(+). It functions in the pathway amino-acid biosynthesis; L-leucine biosynthesis; L-leucine from 3-methyl-2-oxobutanoate: step 1/4. Its function is as follows. Catalyzes the condensation of the acetyl group of acetyl-CoA with 3-methyl-2-oxobutanoate (2-ketoisovalerate) to form 3-carboxy-3-hydroxy-4-methylpentanoate (2-isopropylmalate). The polypeptide is 2-isopropylmalate synthase (Shewanella baltica (strain OS223)).